We begin with the raw amino-acid sequence, 489 residues long: GTPase Der (489 aa).

EngA-type G domains follow at residues 3-166 (PVVA…AEAM) and 200-373 (IKLA…ESAT). GTP contacts are provided by residues 9–16 (GRPNVGKS), 56–60 (DTGGI), 118–121 (NKVD), 206–213 (GKPNVGKS), 253–257 (DTAGV), and 318–321 (NKWD). The region spanning 374 to 458 (RRVSTSMLTR…PIQVRFQEGG (85 aa)) is the KH-like domain.

It belongs to the TRAFAC class TrmE-Era-EngA-EngB-Septin-like GTPase superfamily. EngA (Der) GTPase family. In terms of assembly, associates with the 50S ribosomal subunit.

Its function is as follows. GTPase that plays an essential role in the late steps of ribosome biogenesis. The protein is GTPase Der of Shewanella loihica (strain ATCC BAA-1088 / PV-4).